The chain runs to 117 residues: UPF0145 protein PH1682 (117 aa).

The protein belongs to the UPF0145 family.

The chain is UPF0145 protein PH1682 from Pyrococcus horikoshii (strain ATCC 700860 / DSM 12428 / JCM 9974 / NBRC 100139 / OT-3).